A 31-amino-acid polypeptide reads, in one-letter code: Photosystem II reaction center protein T (31 aa).

A helical transmembrane segment spans residues 3–23; the sequence is SLVYIFVFVVALGVLFFAIAF.

It belongs to the PsbT family. In terms of assembly, PSII is composed of 1 copy each of membrane proteins PsbA, PsbB, PsbC, PsbD, PsbE, PsbF, PsbH, PsbI, PsbJ, PsbK, PsbL, PsbM, PsbT, PsbX, PsbY, PsbZ, Psb30/Ycf12, peripheral proteins PsbO, CyanoQ (PsbQ), PsbU, PsbV and a large number of cofactors. It forms dimeric complexes.

Its subcellular location is the cellular thylakoid membrane. Found at the monomer-monomer interface of the photosystem II (PS II) dimer, plays a role in assembly and dimerization of PSII. PSII is a light-driven water plastoquinone oxidoreductase, using light energy to abstract electrons from H(2)O, generating a proton gradient subsequently used for ATP formation. In Synechococcus elongatus (strain ATCC 33912 / PCC 7942 / FACHB-805) (Anacystis nidulans R2), this protein is Photosystem II reaction center protein T.